The primary structure comprises 430 residues: Endochitinase 46 (430 aa).

The N-terminal stretch at Met-1–Ala-22 is a signal peptide. A propeptide spanning residues Ser-23–Arg-35 is cleaved from the precursor. The GH18 domain occupies Tyr-39–Leu-408. Residues Gly-103–Thr-104 and Gly-130–Thr-133 each bind chitin. Catalysis depends on Glu-172, which acts as the Proton donor. Tyr-173 is a binding site for chitin. N-linked (GlcNAc...) asparagine glycosylation occurs at Asn-219. Chitin-binding positions include Met-238–Asp-241 and Trp-385.

It belongs to the glycosyl hydrolase 18 family. Chitinase class V subfamily.

The protein localises to the secreted. The catalysed reaction is Random endo-hydrolysis of N-acetyl-beta-D-glucosaminide (1-&gt;4)-beta-linkages in chitin and chitodextrins.. Functionally, secreted chitinase involved in the degradation of chitin, a component of the cell walls of fungi and exoskeletal elements of some animals (including worms and arthropods). Plays a morphogenetic role during apical growth, cell division and differentiation (cell wall morphogenesis). Also acts as an antifungal agent. Involved in the degradation and further assimilation of phytopathogenic fungi, namely mycoparasitism, the major mechanism accounting for the antagonistic activity against phytopathogenic fungi displayed by Trichoderma. The sequence is that of Endochitinase 46 (chit46) from Trichoderma harzianum (Hypocrea lixii).